The sequence spans 180 residues: UPF0227 protein YcfP (180 aa).

Belongs to the UPF0227 family.

The sequence is that of UPF0227 protein YcfP from Salmonella choleraesuis (strain SC-B67).